Reading from the N-terminus, the 1099-residue chain is Adenylate-forming reductase Nps11 (1099 aa).

Residues 29–360 (AEHNSNVPFF…GTECGGLNSM (332 aa)) are adenylation (A) domain. Residues His244, 347–348 (NV), Thr352, and 432–435 (LVGR) contribute to the AMP site. The Carrier domain maps to 578-664 (WSEESLVVWL…RLSQALARVV (87 aa)). Ser613 carries the post-translational modification O-(pantetheine 4'-phosphoryl)serine. A reductase (R) domain region spans residues 717–952 (LTGSTGGLGS…VVSWLPPHAV (236 aa)). NADP(+) is bound by residues 721-724 (TGGL), 809-811 (NAW), Tyr883, and Lys887.

This sequence belongs to the adenylate-forming reductase family.

Its function is as follows. Adenylate-forming reductase, a natural product biosynthesis enzyme that resembles non-ribosomal peptide synthetases, yet serves to modify one substrate, rather than to condense two or more building blocks. The A-domain preferentially accepts benzoic acid as substrate. The natural product of the enzyme is not yet known. This Serpula lacrymans var. lacrymans (strain S7.9) (Dry rot fungus) protein is Adenylate-forming reductase Nps11.